A 23-amino-acid polypeptide reads, in one-letter code: Coenzyme PQQ synthesis protein A (23 aa).

A cross-link (pyrroloquinoline quinone (Glu-Tyr)) is located at residues 15-19; that stretch reads EVTLY.

This sequence belongs to the PqqA family.

Its pathway is cofactor biosynthesis; pyrroloquinoline quinone biosynthesis. Required for coenzyme pyrroloquinoline quinone (PQQ) biosynthesis. PQQ is probably formed by cross-linking a specific glutamate to a specific tyrosine residue and excising these residues from the peptide. In Pseudomonas aeruginosa (strain UCBPP-PA14), this protein is Coenzyme PQQ synthesis protein A.